Here is a 228-residue protein sequence, read N- to C-terminus: Thermonuclease (228 aa).

The first 23 residues, 1–23, serve as a signal peptide directing secretion; it reads MTEYLLSAGICMAIVSILLIGMA. The propeptide occupies 24–60; sequence ISNVSKGQYAKRFFYFATSCLVLTLVVVSSLSSSANA. Positions 58-70 are enriched in polar residues; the sequence is ANASQTDNGVNRS. The interval 58-83 is disordered; sequence ANASQTDNGVNRSGSEDPTVYSATST. Residue aspartate 100 coordinates Ca(2+). Arginine 114 is a catalytic residue. Positions 119 and 120 each coordinate Ca(2+). Active-site residues include glutamate 122 and arginine 166.

It belongs to the thermonuclease family. The cofactor is Ca(2+).

The protein resides in the secreted. The catalysed reaction is Endonucleolytic cleavage to nucleoside 3'-phosphates and 3'-phosphooligonucleotide end-products.. Functionally, enzyme that catalyzes the hydrolysis of both DNA and RNA at the 5' position of the phosphodiester bond. The polypeptide is Thermonuclease (nuc) (Staphylococcus aureus (strain COL)).